Here is a 299-residue protein sequence, read N- to C-terminus: Tryptophan prenyltransferase ComQ (299 aa).

Asp-67 and Asp-71 together coordinate Mg(2+).

It belongs to the FPP/GGPP synthase family. Mg(2+) is required as a cofactor.

It is found in the cell membrane. It carries out the reaction L-tryptophyl-[protein] + (2E,6E)-farnesyl diphosphate = (2S,3R)-3-farnesyl-2,3-dihydro-2,N(alpha)-cyclo-L-tryptophyl-[protein] + diphosphate. Its function is as follows. Part of a major quorum-sensing system that regulates the development of genetic competence. Involved in the maturation of the competence pheromone ComX. Acts by catalyzing the transfer of a farnesyl group on the ComX pheromone. Shows weak geranylation activity with geranyl diphosphate (GPP). This is Tryptophan prenyltransferase ComQ from Bacillus subtilis (strain 168).